A 93-amino-acid chain; its full sequence is Small ribosomal subunit protein uS19 (93 aa).

This sequence belongs to the universal ribosomal protein uS19 family.

Protein S19 forms a complex with S13 that binds strongly to the 16S ribosomal RNA. This is Small ribosomal subunit protein uS19 from Phytoplasma australiense.